The chain runs to 89 residues: Small ribosomal subunit protein uS15 (89 aa).

Residues 1–23 (MTLNTQEKQKLINTHQNHGTDTG) form a disordered region.

The protein belongs to the universal ribosomal protein uS15 family. In terms of assembly, part of the 30S ribosomal subunit. Forms a bridge to the 50S subunit in the 70S ribosome, contacting the 23S rRNA.

In terms of biological role, one of the primary rRNA binding proteins, it binds directly to 16S rRNA where it helps nucleate assembly of the platform of the 30S subunit by binding and bridging several RNA helices of the 16S rRNA. Its function is as follows. Forms an intersubunit bridge (bridge B4) with the 23S rRNA of the 50S subunit in the ribosome. The polypeptide is Small ribosomal subunit protein uS15 (Prochlorococcus marinus (strain MIT 9211)).